A 301-amino-acid chain; its full sequence is Vomeronasal type-1 receptor 4 (301 aa).

Residues 1 to 5 are Extracellular-facing; it reads MASRY. The chain crosses the membrane as a helical span at residues 6 to 26; sequence VAVGMILSQTVVGVLGSFSVL. The Cytoplasmic segment spans residues 27–48; that stretch reads LHYLSFYCTGCRLRSTDLIVKH. The chain crosses the membrane as a helical span at residues 49-69; the sequence is LIVANFLALRCKGVPQTMAAF. The Extracellular portion of the chain corresponds to 70–88; it reads GVRYFLNALGCKLVFYLHR. The chain crosses the membrane as a helical span at residues 89-109; it reads VGRGVSIGTTCLLSVFQVITV. At 110–126 the chain is on the cytoplasmic side; the sequence is SSRKSRWAKLKEKAPKH. Residues 127–147 traverse the membrane as a helical segment; the sequence is VGFSVLLCWIVCMLVNIIFPM. Over 148-185 the chain is Extracellular; the sequence is YVTGKWNYTNITVNEDLGYCSGGGNNKIAQTLRAMLLS. Residues Asn-154 and Asn-157 are each glycosylated (N-linked (GlcNAc...) asparagine). The helical transmembrane segment at 186-206 threads the bilayer; the sequence is FPDVLCLGLMLWVSSSMVCIL. The Cytoplasmic segment spans residues 207–234; sequence HRHKQRVQHIDRSNLSPRASPENRATQS. A helical transmembrane segment spans residues 235-255; that stretch reads ILILVSTFVSSYTLSCLFQVC. At 256 to 264 the chain is on the extracellular side; it reads MALLDNPNS. A helical transmembrane segment spans residues 265–285; sequence LLVNTSALMSVCFPTLSPFVL. Topologically, residues 286 to 301 are cytoplasmic; it reads MSCDPSVYRFCFAWKR.

Belongs to the G-protein coupled receptor 1 family.

Its subcellular location is the cell membrane. Its function is as follows. Putative pheromone receptor. In Homo sapiens (Human), this protein is Vomeronasal type-1 receptor 4 (VN1R4).